A 147-amino-acid chain; its full sequence is Hemoglobin subunit beta-1 (147 aa).

Residues 3–147 (EWTATERTHI…VVSALGRQYH (145 aa)) enclose the Globin domain. The heme b site is built by histidine 64 and histidine 93.

Belongs to the globin family. Hb 1 is a heterotetramer of two alpha-1 and two beta-1 chains. Hb 2 is a heterotetramer of two alpha-2 and two beta-1 chains. Red blood cells.

Functionally, involved in oxygen transport from gills to the various peripheral tissues. This is Hemoglobin subunit beta-1 (hbb1) from Boreogadus saida (Polar cod).